A 355-amino-acid chain; its full sequence is Ubiquinone biosynthesis protein COQ4 homolog, mitochondrial (355 aa).

4 residues coordinate Zn(2+): histidine 134, aspartate 135, histidine 138, and glutamate 150.

The protein belongs to the COQ4 family. In terms of assembly, component of a multi-subunit COQ enzyme complex. The cofactor is Zn(2+).

It localises to the mitochondrion inner membrane. The enzyme catalyses a 4-hydroxy-3-methoxy-5-(all-trans-polyprenyl)benzoate + H(+) = a 2-methoxy-6-(all-trans-polyprenyl)phenol + CO2. The protein operates within cofactor biosynthesis; ubiquinone biosynthesis. Lyase that catalyzes the C1-decarboxylation of 4-hydroxy-3-methoxy-5-(all-trans-polyprenyl)benzoic acid into 2-methoxy-6-(all-trans-polyprenyl)phenol during ubiquinone biosynthesis. This chain is Ubiquinone biosynthesis protein COQ4 homolog, mitochondrial, found in Plasmodium chabaudi chabaudi.